Here is a 214-residue protein sequence, read N- to C-terminus: Alpha-S1-casein (214 aa).

The N-terminal stretch at 1-15 is a signal peptide; it reads MKLLILTCLVAVALA. The segment at 59-91 is disordered; sequence IGSESTEDQAMEDAKQMKAGSSSSSEEIVPNSA. Phosphoserine is present on residues Ser-61, Ser-63, Ser-79, Ser-80, Ser-81, Ser-82, Ser-83, Ser-90, and Ser-130.

It belongs to the alpha-casein family. In terms of tissue distribution, mammary gland specific. Secreted in milk.

It localises to the secreted. Functionally, important role in the capacity of milk to transport calcium phosphate. The polypeptide is Alpha-S1-casein (CSN1S1) (Capra hircus (Goat)).